The sequence spans 278 residues: Probable endonuclease 4 (278 aa).

Histidine 66, histidine 106, glutamate 142, aspartate 176, histidine 179, histidine 213, aspartate 226, histidine 228, and glutamate 258 together coordinate Zn(2+).

It belongs to the AP endonuclease 2 family. Requires Zn(2+) as cofactor.

The catalysed reaction is Endonucleolytic cleavage to 5'-phosphooligonucleotide end-products.. Its function is as follows. Endonuclease IV plays a role in DNA repair. It cleaves phosphodiester bonds at apurinic or apyrimidinic (AP) sites, generating a 3'-hydroxyl group and a 5'-terminal sugar phosphate. This is Probable endonuclease 4 from Halothermothrix orenii (strain H 168 / OCM 544 / DSM 9562).